The sequence spans 331 residues: Cytosolic arginine sensor for mTORC1 subunit 1 (331 aa).

Residue serine 14 is modified to Phosphoserine. An ACT 1 domain is found at 72–139; the sequence is AEATWLVMNV…SVVIHTLARE (68 aa). Position 110–111 (110–111) interacts with L-arginine; that stretch reads SV. Residues 155–174 are disordered; the sequence is GDDSSNGFPQAQHGPSPTVH. Residues 156–174 are compositionally biased toward polar residues; the sequence is DDSSNGFPQAQHGPSPTVH. An ACT 2 domain is found at 262-322; that stretch reads WRMVRIGGQP…SCVIDILQRR (61 aa). L-arginine contacts are provided by residues glycine 273, 279-280, and 299-303; these read IV and TFNFD.

It belongs to the GATS family. As to quaternary structure, forms homodimers and heterodimers with CASTOR2. Interacts with the GATOR2 complex which is composed of MIOS, SEC13, SEH1L, WDR24 and WDR59; the interaction is negatively regulated by arginine. Interacts with TM4SF5; the interaction is positively regulated by leucine and is negatively regulated by arginine. Post-translationally, phosphorylation at Ser-14 by AKT1, promoting the interaction between CASTOR1 and RNF167. In terms of processing, ubiquitinated by RNF167 via 'Lys-29'-polyubiquitination, leading to its degradation, releasing the GATOR2 complex. Ubiquitination by RNF167 is promoted by phosphorylation at Ser-14 by AKT1.

It is found in the cytoplasm. It localises to the cytosol. Its function is as follows. Functions as an intracellular arginine sensor within the amino acid-sensing branch of the TORC1 signaling pathway. As a homodimer or a heterodimer with CASTOR2, binds and inhibits the GATOR subcomplex GATOR2 and thereby mTORC1. Binding of arginine to CASTOR1 allosterically disrupts the interaction of CASTOR1-containing dimers with GATOR2 which can in turn activate mTORC1 and the TORC1 signaling pathway. This chain is Cytosolic arginine sensor for mTORC1 subunit 1, found in Rattus norvegicus (Rat).